Here is a 364-residue protein sequence, read N- to C-terminus: C2 calcium-dependent domain-containing protein 4A (364 aa).

Disordered stretches follow at residues 118 to 175 and 192 to 242; these read GSPS…PPRC and AGRS…RPER. Polar residues predominate over residues 220 to 233; that stretch reads SPGSPTQAPVTSLS. Residues 254-364 enclose the C2 domain; the sequence is AGGALRLAAE…ELLLGPLLLL (111 aa).

It belongs to the C2CD4 family.

It is found in the nucleus. Its function is as follows. May be involved in inflammatory process. May regulate cell architecture and adhesion. This is C2 calcium-dependent domain-containing protein 4A (C2CD4A) from Bos taurus (Bovine).